Here is a 248-residue protein sequence, read N- to C-terminus: Probable transcriptional regulatory protein blr1534 (248 aa).

Residues 1–21 (MAGHSQFKNIMHRKGRQDAQK) are disordered.

It belongs to the TACO1 family.

It localises to the cytoplasm. The protein is Probable transcriptional regulatory protein blr1534 of Bradyrhizobium diazoefficiens (strain JCM 10833 / BCRC 13528 / IAM 13628 / NBRC 14792 / USDA 110).